The chain runs to 625 residues: Probable inactive receptor kinase At5g16590 (625 aa).

Residues methionine 1 to serine 23 form the signal peptide. LRR repeat units lie at residues lysine 88 to threonine 111, leucine 112 to leucine 134, asparagine 136 to alanine 158, arginine 160 to leucine 182, and glutamine 183 to proline 204. Residues alanine 246–phenylalanine 266 form a helical membrane-spanning segment. The 271-residue stretch at lysine 343–valine 613 folds into the Protein kinase domain. Position 345 is a phosphoserine (serine 345). ATP is bound by residues leucine 349–serine 357 and lysine 371. Serine 422 is modified (phosphoserine). 2 positions are modified to phosphothreonine: threonine 442 and threonine 496. A Phosphoserine modification is found at serine 517. A Phosphothreonine modification is found at threonine 593. Residues serine 619 and serine 624 each carry the phosphoserine modification.

This sequence belongs to the protein kinase superfamily. Ser/Thr protein kinase family.

The protein localises to the cell membrane. Functionally, might be involved in early recognition of growth promoting fungi. Appears to be specific for P.indica. This is Probable inactive receptor kinase At5g16590 from Arabidopsis thaliana (Mouse-ear cress).